We begin with the raw amino-acid sequence, 141 residues long: Large ribosomal subunit protein uL13 (141 aa).

It belongs to the universal ribosomal protein uL13 family. Part of the 50S ribosomal subunit.

Functionally, this protein is one of the early assembly proteins of the 50S ribosomal subunit, although it is not seen to bind rRNA by itself. It is important during the early stages of 50S assembly. The polypeptide is Large ribosomal subunit protein uL13 (Deinococcus deserti (strain DSM 17065 / CIP 109153 / LMG 22923 / VCD115)).